The primary structure comprises 104 residues: Protein RnfH (104 aa).

The protein belongs to the UPF0125 (RnfH) family.

In Pseudomonas fluorescens (strain ATCC BAA-477 / NRRL B-23932 / Pf-5), this protein is Protein RnfH.